Consider the following 121-residue polypeptide: Alpha-lactalbumin (121 aa).

The 121-residue stretch at 1 to 121 (IDYRKCQASQ…CLEDLDQWRC (121 aa)) folds into the C-type lysozyme domain. Intrachain disulfides connect C6-C121, C28-C112, C61-C77, and C73-C91. Residue N44 is glycosylated (N-linked (GlcNAc...) asparagine). Ca(2+) contacts are provided by K79, D82, D84, D87, and D88.

This sequence belongs to the glycosyl hydrolase 22 family. In terms of assembly, lactose synthase (LS) is a heterodimer of a catalytic component, beta1,4-galactosyltransferase (beta4Gal-T1) and a regulatory component, alpha-lactalbumin (LA). Mammary gland specific. Secreted in milk.

The protein resides in the secreted. Functionally, regulatory subunit of lactose synthase, changes the substrate specificity of galactosyltransferase in the mammary gland making glucose a good acceptor substrate for this enzyme. This enables LS to synthesize lactose, the major carbohydrate component of milk. In other tissues, galactosyltransferase transfers galactose onto the N-acetylglucosamine of the oligosaccharide chains in glycoproteins. The protein is Alpha-lactalbumin (LALBA) of Notamacropus rufogriseus (Red-necked wallaby).